Here is a 32-residue protein sequence, read N- to C-terminus: Periplasmic [NiFeSe] hydrogenase small subunit (32 aa).

The [4Fe-4S] cluster site is built by C18 and C21.

Belongs to the [NiFe]/[NiFeSe] hydrogenase small subunit family. Heterodimer of a large and a small subunit. [3Fe-4S] cluster is required as a cofactor. Requires [4Fe-4S] cluster as cofactor.

It localises to the periplasm. It carries out the reaction H2 + A = AH2. This Desulfomicrobium norvegicum (strain DSM 1741 / NCIMB 8310) (Desulfovibrio baculatus (strain Norway 4)) protein is Periplasmic [NiFeSe] hydrogenase small subunit.